The sequence spans 533 residues: Retinoid isomerohydrolase (533 aa).

At Ser-2 the chain carries N-acetylserine. 2 positions are modified to phosphothreonine: Thr-101 and Thr-105. The S-palmitoyl cysteine; in membrane form moiety is linked to residue Cys-112. Lys-113 is subject to N6-acetyllysine. Phosphoserine is present on Ser-117. His-180 contacts Fe cation. A lipid anchor (S-palmitoyl cysteine; in membrane form) is attached at Cys-231. His-241 and His-313 together coordinate Fe cation. Residues Cys-329 and Cys-330 are each lipidated (S-palmitoyl cysteine; in membrane form). A Fe cation-binding site is contributed by His-527.

The protein belongs to the carotenoid oxygenase family. As to quaternary structure, interacts with MYO7A; this mediates light-dependent intracellular transport of RPE65. The cofactor is Fe(2+). In terms of processing, palmitoylation by LRAT regulates ligand binding specificity; the palmitoylated form (membrane form) specifically binds all-trans-retinyl-palmitate, while the soluble unpalmitoylated form binds all-trans-retinol (vitamin A). Retinal pigment epithelium specific.

Its subcellular location is the cytoplasm. It localises to the cell membrane. It is found in the microsome membrane. It catalyses the reaction an all-trans-retinyl ester + H2O = 11-cis-retinol + a fatty acid + H(+). The catalysed reaction is lutein = (3R,3'S)-zeaxanthin. It carries out the reaction all-trans-retinyl hexadecanoate + H2O = 11-cis-retinol + hexadecanoate + H(+). In terms of biological role, critical isomerohydrolase in the retinoid cycle involved in regeneration of 11-cis-retinal, the chromophore of rod and cone opsins. Catalyzes the cleavage and isomerization of all-trans-retinyl fatty acid esters to 11-cis-retinol which is further oxidized by 11-cis retinol dehydrogenase to 11-cis-retinal for use as visual chromophore. Essential for the production of 11-cis retinal for both rod and cone photoreceptors. Also capable of catalyzing the isomerization of lutein to meso-zeaxanthin an eye-specific carotenoid. The soluble form binds vitamin A (all-trans-retinol), making it available for LRAT processing to all-trans-retinyl ester. The membrane form, palmitoylated by LRAT, binds all-trans-retinyl esters, making them available for IMH (isomerohydrolase) processing to all-cis-retinol. The soluble form is regenerated by transferring its palmitoyl groups onto 11-cis-retinol, a reaction catalyzed by LRAT. This is Retinoid isomerohydrolase (RPE65) from Bos taurus (Bovine).